Consider the following 506-residue polypeptide: Fe(3+)-transport system permease protein FbpB 2 (506 aa).

Helical transmembrane passes span 9-29 (LTLL…YVIL), 57-77 (LLMV…AFLL), 90-110 (VAMT…WISL), 116-136 (VFWG…YLPV), 174-194 (IGSS…AVSI), 218-238 (ALLS…EIFF), 275-295 (IFIL…IVGT), 314-334 (FIIS…LVWA), 350-370 (PYLL…YFSI), 379-399 (TFFV…QTTL), 428-448 (LTLP…FLNL), and 480-500 (AAAT…VFLL). The region spanning 52 to 233 (LSNTMLLMVC…LMAICILIVF (182 aa)) is the ABC transmembrane type-1 1 domain. The region spanning 310-500 (FSNSFIISGL…LFSGIPVFLL (191 aa)) is the ABC transmembrane type-1 2 domain.

This sequence belongs to the binding-protein-dependent transport system permease family. FbpB subfamily. As to quaternary structure, the complex is composed of two ATP-binding proteins (FbpC), two transmembrane proteins (FbpB) and a solute-binding protein (FbpA).

It is found in the cell inner membrane. Part of the ABC transporter complex FbpABC (TC 3.A.1.10.1) involved in Fe(3+) ions import. Probably responsible for the translocation of the substrate across the membrane. The chain is Fe(3+)-transport system permease protein FbpB 2 (fbpB2) from Haemophilus influenzae (strain ATCC 51907 / DSM 11121 / KW20 / Rd).